A 149-amino-acid polypeptide reads, in one-letter code: Large ribosomal subunit protein bL9 (149 aa).

It belongs to the bacterial ribosomal protein bL9 family.

In terms of biological role, binds to the 23S rRNA. The chain is Large ribosomal subunit protein bL9 from Amoebophilus asiaticus (strain 5a2).